A 461-amino-acid chain; its full sequence is MLKEYRTVKEVVGPLMLVDQVESVSFDELVEIELHNGEKRRGRVLEINKDKALVQLFEGSAGINIKGAKVKFLGKPLELGVSEDMLGRVFDGLGNPKDGGPKIIADEKRDISGIPINPVARNYPDEFIQTGVSAIDGLNTLVRGQKLPVFSGSGLPHAELAAQIARQAKVLKSDSKFAVVFAAIGTTFEEAQYFIDDFTKTGAIDRAVLFINLANDPAIERIATPRMALTAAEYLAFEKGMHVLVIMTDITNYCEALREVSAARKEVPGRRGYPGYLYTDLSTIYERAGRILGKEGSITQIPILTMPEDDKTHPIPDLTGYITEGQIILSRELYKKGIMPPIDVLPSLSRLKDKGIGKEKTREDHADTMNQLFAAYAQGKQAKELSVILGESALSDTDKLYAKFADAFEEEYVSQGFTTNRTIEETLNLGWKLLTILPKSELKRIRDEYLEKYLNKAEESK.

The protein belongs to the ATPase alpha/beta chains family.

In terms of biological role, produces ATP from ADP in the presence of a proton gradient across the membrane. The V-type beta chain is a regulatory subunit. In Clostridium botulinum (strain Kyoto / Type A2), this protein is V-type ATP synthase beta chain.